A 484-amino-acid polypeptide reads, in one-letter code: MKVLFAVSECVPFVKSGGLADVAGALPKELALLGIETVVMMPKYSLIAEDVRRRMVKTAECEVRVGWRRQFCGIEHLEHDGVSYYFLDHGYYFNRDSLYGHYDDGERFAFFSRAVLEALYALNFEADVIHTHDWHTGMVNYLLKEEYRKKPFYQHMKSVFTIHNLQFQGIFPKEAVHDLLGLDISHFTTEKLEFYGNINYMKGGIIAADQVTTVSPTYRDEILTPYYGERLEGVLSDKKDALTGILNGIDDVLYDPLNDPHIDYHYDAVNRDGKRKNKAVIQKTFGLPVNEDIPLISMVARLTKQKGFDLIKRVLHELFEEEDMQLIVLGTGEAEFENYFRYMEHAFPDRCKAYIGFHEPLSRKIYAASDLFLMPSKFEPCGLGQLIALRYGAVPVVRETGGLHDTVTAYRETTGEGNGFTFAHFNAHDMKHTIKRALSFYHRKEEWGRIVQKAMTHDVSWALSARQYQRLYSREIKGEAHVLK.

ADP-alpha-D-glucose is bound at residue Lys15.

Belongs to the glycosyltransferase 1 family. Bacterial/plant glycogen synthase subfamily.

It carries out the reaction [(1-&gt;4)-alpha-D-glucosyl](n) + ADP-alpha-D-glucose = [(1-&gt;4)-alpha-D-glucosyl](n+1) + ADP + H(+). It functions in the pathway glycan biosynthesis; glycogen biosynthesis. Synthesizes alpha-1,4-glucan chains using ADP-glucose. This is Glycogen synthase from Bacillus licheniformis (strain ATCC 14580 / DSM 13 / JCM 2505 / CCUG 7422 / NBRC 12200 / NCIMB 9375 / NCTC 10341 / NRRL NRS-1264 / Gibson 46).